A 472-amino-acid chain; its full sequence is Glutamine synthetase (472 aa).

One can recognise a GS beta-grasp domain in the interval 17–101; sequence YDIKFVLLRF…LRCSIYEPST (85 aa). Positions 109-472 constitute a GS catalytic domain; it reads PRSIAIRAEN…HPVEFEMYYA (364 aa). Residues Glu134 and Glu136 each coordinate Mg(2+). Residue Glu212 participates in ATP binding. Mg(2+)-binding residues include Glu217 and Glu225. Residues 269-270 and Gly270 contribute to the L-glutamate site; that span reads NG. Residue His274 participates in Mg(2+) binding. ATP-binding positions include 276–278 and Ser278; that span reads NMS. The L-glutamate site is built by Arg326, Glu332, and Arg344. ATP contacts are provided by Arg344, Arg349, and Lys357. Glu362 contacts Mg(2+). L-glutamate is bound at residue Arg364. Tyr402 is subject to O-AMP-tyrosine.

Belongs to the glutamine synthetase family. As to quaternary structure, oligomer of 12 subunits arranged in the form of two hexameric ring. Mg(2+) serves as cofactor.

It localises to the cytoplasm. The enzyme catalyses L-glutamate + NH4(+) + ATP = L-glutamine + ADP + phosphate + H(+). Its activity is regulated as follows. The activity of this enzyme could be controlled by adenylation under conditions of abundant glutamine. Functionally, catalyzes the ATP-dependent biosynthesis of glutamine from glutamate and ammonia. The polypeptide is Glutamine synthetase (Pasteurella multocida (strain Pm70)).